The sequence spans 905 residues: Probable cation-transporting ATPase F (905 aa).

A run of 3 helical transmembrane segments spans residues 84–104 (EFVD…VGFI), 248–268 (FSKF…GVGL), and 283–303 (ALAV…TLAI). Residue Asp-333 is the 4-aspartylphosphate intermediate of the active site. Residues Asp-643 and Asp-647 each contribute to the Mg(2+) site. The next 6 membrane-spanning stretches (helical) occupy residues 716 to 736 (ILAA…ILWI), 738 to 758 (MTTA…AGIM), 778 to 798 (TLLV…WELD), 808 to 828 (TAAL…CRSL), 842 to 862 (WIIL…YLPA), and 872 to 892 (IDIG…IVVA).

The protein belongs to the cation transport ATPase (P-type) (TC 3.A.3) family. Type IIA subfamily.

The protein resides in the cell membrane. The enzyme catalyses ATP + H2O = ADP + phosphate + H(+). The chain is Probable cation-transporting ATPase F (ctpF) from Mycobacterium bovis (strain ATCC BAA-935 / AF2122/97).